Here is a 237-residue protein sequence, read N- to C-terminus: Phosphoribosylaminoimidazole-succinocarboxamide synthase (237 aa).

This sequence belongs to the SAICAR synthetase family.

The catalysed reaction is 5-amino-1-(5-phospho-D-ribosyl)imidazole-4-carboxylate + L-aspartate + ATP = (2S)-2-[5-amino-1-(5-phospho-beta-D-ribosyl)imidazole-4-carboxamido]succinate + ADP + phosphate + 2 H(+). It functions in the pathway purine metabolism; IMP biosynthesis via de novo pathway; 5-amino-1-(5-phospho-D-ribosyl)imidazole-4-carboxamide from 5-amino-1-(5-phospho-D-ribosyl)imidazole-4-carboxylate: step 1/2. This is Phosphoribosylaminoimidazole-succinocarboxamide synthase from Shigella dysenteriae serotype 1 (strain Sd197).